The chain runs to 345 residues: Holliday junction branch migration complex subunit RuvB (345 aa).

A large ATPase domain (RuvB-L) region spans residues 1–186 (MSTDPDEREV…FGFTAHMDFY (186 aa)). Residues leucine 25, arginine 26, glycine 67, lysine 70, threonine 71, serine 72, 133 to 135 (EDF), arginine 176, tyrosine 186, and arginine 223 contribute to the ATP site. Threonine 71 provides a ligand contact to Mg(2+). The segment at 187–257 (EPAELERVLV…VAKAALAVYD (71 aa)) is small ATPAse domain (RuvB-S). Residues 260–345 (ELGLDRLDRA…AGANQPGLFE (86 aa)) are head domain (RuvB-H). DNA contacts are provided by arginine 315 and arginine 320.

It belongs to the RuvB family. Homohexamer. Forms an RuvA(8)-RuvB(12)-Holliday junction (HJ) complex. HJ DNA is sandwiched between 2 RuvA tetramers; dsDNA enters through RuvA and exits via RuvB. An RuvB hexamer assembles on each DNA strand where it exits the tetramer. Each RuvB hexamer is contacted by two RuvA subunits (via domain III) on 2 adjacent RuvB subunits; this complex drives branch migration. In the full resolvosome a probable DNA-RuvA(4)-RuvB(12)-RuvC(2) complex forms which resolves the HJ.

It localises to the cytoplasm. The catalysed reaction is ATP + H2O = ADP + phosphate + H(+). In terms of biological role, the RuvA-RuvB-RuvC complex processes Holliday junction (HJ) DNA during genetic recombination and DNA repair, while the RuvA-RuvB complex plays an important role in the rescue of blocked DNA replication forks via replication fork reversal (RFR). RuvA specifically binds to HJ cruciform DNA, conferring on it an open structure. The RuvB hexamer acts as an ATP-dependent pump, pulling dsDNA into and through the RuvAB complex. RuvB forms 2 homohexamers on either side of HJ DNA bound by 1 or 2 RuvA tetramers; 4 subunits per hexamer contact DNA at a time. Coordinated motions by a converter formed by DNA-disengaged RuvB subunits stimulates ATP hydrolysis and nucleotide exchange. Immobilization of the converter enables RuvB to convert the ATP-contained energy into a lever motion, pulling 2 nucleotides of DNA out of the RuvA tetramer per ATP hydrolyzed, thus driving DNA branch migration. The RuvB motors rotate together with the DNA substrate, which together with the progressing nucleotide cycle form the mechanistic basis for DNA recombination by continuous HJ branch migration. Branch migration allows RuvC to scan DNA until it finds its consensus sequence, where it cleaves and resolves cruciform DNA. This chain is Holliday junction branch migration complex subunit RuvB, found in Mycobacterium marinum (strain ATCC BAA-535 / M).